The chain runs to 115 residues: Large ribosomal subunit protein bL20 (115 aa).

It belongs to the bacterial ribosomal protein bL20 family.

Binds directly to 23S ribosomal RNA and is necessary for the in vitro assembly process of the 50S ribosomal subunit. It is not involved in the protein synthesizing functions of that subunit. This chain is Large ribosomal subunit protein bL20, found in Bdellovibrio bacteriovorus (strain ATCC 15356 / DSM 50701 / NCIMB 9529 / HD100).